Consider the following 555-residue polypeptide: Probable metabolite transport protein YDR387C (555 aa).

Residues 1–39 (MSTDESEDVYSDLYSIISQVTSNTANDIEQLPYALTFKT) are Cytoplasmic-facing. The helical transmembrane segment at 40 to 60 (SLIFVGATIGGLLFGYDTGVI) threads the bilayer. Over 61-83 (SGVLLSLKPEDLSLVVLTDVQKE) the chain is Extracellular. Residues 84–104 (LITSSTSVGSFFGSILAFPLA) traverse the membrane as a helical segment. Over 105 to 118 (DRYGRRITLAICCS) the chain is Cytoplasmic. The helical transmembrane segment at 119–139 (IFILAAIGMAIARTLTFLICG) threads the bilayer. A topological domain (extracellular) is located at residue Arg140. The chain crosses the membrane as a helical span at residues 141-161 (LLVGIAVGVSAQCVPLFLSEI). Residues 162-168 (SPSRIRG) lie on the Cytoplasmic side of the membrane. A helical membrane pass occupies residues 169 to 189 (FMLTLNIIAITGGQLVSYVIA). Over 190-200 (SLMKEIDNSWR) the chain is Extracellular. The chain crosses the membrane as a helical span at residues 201–221 (YLFALSAIPAILFLSILDFIP). Residues 222–356 (ESPRWSISKG…TIRALIVGCM (135 aa)) lie on the Cytoplasmic side of the membrane. Positions 289 to 313 (SSTSGTLSPPNIKRLSSNTERTSNT) are disordered. Residues 357–377 (LMFFQQITGFNAFMYYAAIIF) traverse the membrane as a helical segment. At 378–384 (SKFNIKN) the chain is on the extracellular side. The chain crosses the membrane as a helical span at residues 385-405 (PLLPPILIASTNFIFTFFAMY). Topologically, residues 406-413 (TMDSLGRR) are cytoplasmic. Residues 414–434 (AILLRTILIMTVGLLLCSVGF) form a helical membrane-spanning segment. Residues 435–440 (GHDQVN) are Extracellular-facing. The chain crosses the membrane as a helical span at residues 441 to 461 (LLLISVVIYVAAYASAMGSVP). The Cytoplasmic portion of the chain corresponds to 462 to 474 (WTCVEFLPLNRRS). The chain crosses the membrane as a helical span at residues 475–497 (FGASCIACTNWLTNAFVSMTYLS). The Extracellular segment spans residues 498-506 (TINTIGDEN). Residues 507–527 (TMLIFAFFTVCAWFFVYFWYP) form a helical membrane-spanning segment. Residues 528–555 (EVKGLSLEEVGRVFDNGIDVHYVFRTYH) are Cytoplasmic-facing.

This sequence belongs to the major facilitator superfamily. Sugar transporter (TC 2.A.1.1) family.

The protein localises to the membrane. The sequence is that of Probable metabolite transport protein YDR387C from Saccharomyces cerevisiae (strain ATCC 204508 / S288c) (Baker's yeast).